The sequence spans 434 residues: UDP-N-acetylmuramoylalanine--D-glutamate ligase (434 aa).

An ATP-binding site is contributed by 117-123 (GTNGKST).

This sequence belongs to the MurCDEF family.

The protein resides in the cytoplasm. It carries out the reaction UDP-N-acetyl-alpha-D-muramoyl-L-alanine + D-glutamate + ATP = UDP-N-acetyl-alpha-D-muramoyl-L-alanyl-D-glutamate + ADP + phosphate + H(+). The protein operates within cell wall biogenesis; peptidoglycan biosynthesis. In terms of biological role, cell wall formation. Catalyzes the addition of glutamate to the nucleotide precursor UDP-N-acetylmuramoyl-L-alanine (UMA). This chain is UDP-N-acetylmuramoylalanine--D-glutamate ligase, found in Sphingopyxis alaskensis (strain DSM 13593 / LMG 18877 / RB2256) (Sphingomonas alaskensis).